A 337-amino-acid chain; its full sequence is MNATSVPPAEGSCPSNALITKQIIPMLYFVVFVAGILLNGMSGWVFFYVPSSKSFIVYLKNIVIADFLMSLTFPFKILGDLGLGLWQVKVFVCRVSAVLFYINMYVSIVFFGLIGFDRYYKIVKPLLTSFIQSISYSKLLSVLVWSLTLLIALPNMILTNRNVTEATRVKCMDLKSDLGLKWHKASSYIFVGIFWIVFLSLIIFYTAITKKIFKSHFKSRKNSVSVKKKSSRNIFSIMFVFFICFVPYHIARIPYTQSQTEAHYSCQSKQILFYVKEFSLLLSAANVCLDPIIYFFLCQPFREVLCKKLHIQLKTQHDSETSKIKRENIIQESTDTL.

At Met1–Tyr28 the chain is on the extracellular side. An N-linked (GlcNAc...) asparagine glycan is attached at Asn2. A helical membrane pass occupies residues Phe29 to Val49. Residues Pro50–Ser54 lie on the Cytoplasmic side of the membrane. A helical transmembrane segment spans residues Phe55–Phe75. Residues Lys76–Val95 lie on the Extracellular side of the membrane. A disulfide bridge links Cys93 with Cys171. The chain crosses the membrane as a helical span at residues Ser96–Phe116. Residues Asp117 to Lys138 are Cytoplasmic-facing. A helical membrane pass occupies residues Leu139–Thr159. The Extracellular segment spans residues Asn160–Ser187. N-linked (GlcNAc...) asparagine glycosylation is present at Asn162. Residues Tyr188–Ile208 traverse the membrane as a helical segment. Over Thr209–Asn233 the chain is Cytoplasmic. The chain crosses the membrane as a helical span at residues Ile234–Pro254. Over Tyr255 to Glu277 the chain is Extracellular. Residues Phe278–Cys298 traverse the membrane as a helical segment. Residues Gln299 to Leu337 are Cytoplasmic-facing.

Belongs to the G-protein coupled receptor 1 family.

The protein resides in the cell membrane. Its function is as follows. Receptor for UDP-glucose and other UDP-sugar coupled to G-proteins. Not activated by ATP, ADP, UTP or ATP. The polypeptide is P2Y purinoceptor 14 (P2RY14) (Bos taurus (Bovine)).